Reading from the N-terminus, the 83-residue chain is Protein FAM240A (83 aa).

The protein belongs to the FAM240 family.

This is Protein FAM240A from Homo sapiens (Human).